A 347-amino-acid polypeptide reads, in one-letter code: Very-long-chain 3-oxoacyl-CoA reductase (347 aa).

A helical membrane pass occupies residues 20 to 40; sequence LLWVVFGLGVLKCTTLSLRFL. V66, D120, N147, Y223, K227, V256, and S258 together coordinate NADP(+). Catalysis depends on Y223, which acts as the Proton donor. The active-site Lowers pKa of active site Tyr is K227.

Belongs to the short-chain dehydrogenases/reductases (SDR) family. As to quaternary structure, interacts with the fatty acid elongation system components ELO3 and TSC13.

The protein localises to the endoplasmic reticulum membrane. The catalysed reaction is a very-long-chain (3R)-3-hydroxyacyl-CoA + NADP(+) = a very-long-chain 3-oxoacyl-CoA + NADPH + H(+). The protein operates within lipid metabolism; fatty acid biosynthesis. Its function is as follows. Component of the microsomal membrane bound fatty acid elongation system, which produces the 26-carbon very long-chain fatty acids (VLCFA) from palmitate. Catalyzes the reduction of the 3-ketoacyl-CoA intermediate that is formed in each cycle of fatty acid elongation. VLCFAs serve as precursors for ceramide and sphingolipids. This is Very-long-chain 3-oxoacyl-CoA reductase from Saccharomyces cerevisiae (strain RM11-1a) (Baker's yeast).